Here is a 330-residue protein sequence, read N- to C-terminus: Phenylalanine--tRNA ligase alpha subunit (330 aa).

Position 246 (E246) interacts with Mg(2+).

The protein belongs to the class-II aminoacyl-tRNA synthetase family. Phe-tRNA synthetase alpha subunit type 1 subfamily. Tetramer of two alpha and two beta subunits. The cofactor is Mg(2+).

Its subcellular location is the cytoplasm. It carries out the reaction tRNA(Phe) + L-phenylalanine + ATP = L-phenylalanyl-tRNA(Phe) + AMP + diphosphate + H(+). This Wolinella succinogenes (strain ATCC 29543 / DSM 1740 / CCUG 13145 / JCM 31913 / LMG 7466 / NCTC 11488 / FDC 602W) (Vibrio succinogenes) protein is Phenylalanine--tRNA ligase alpha subunit.